The following is a 276-amino-acid chain: uncharacterized protein (276 aa).

In terms of domain architecture, AB hydrolase-1 spans 20–137 (PVLIFIPGAN…PPINTFLPDS (118 aa)).

This sequence belongs to the AB hydrolase superfamily.

This is an uncharacterized protein from Staphylococcus aureus (strain MRSA252).